The chain runs to 181 residues: Cytochrome c-type biogenesis protein CcmE (181 aa).

Residues 1–8 (MNPRRKSR) lie on the Cytoplasmic side of the membrane. A helical; Signal-anchor for type II membrane protein transmembrane segment spans residues 9–29 (LKVVVLIMFSVAVAAGLTLYA). Topologically, residues 30-181 (LSQNIDLFYT…TFNTLQGESK (152 aa)) are periplasmic. Heme is bound by residues H131 and Y135.

The protein belongs to the CcmE/CycJ family.

The protein localises to the cell inner membrane. Heme chaperone required for the biogenesis of c-type cytochromes. Transiently binds heme delivered by CcmC and transfers the heme to apo-cytochromes in a process facilitated by CcmF and CcmH. The protein is Cytochrome c-type biogenesis protein CcmE of Haemophilus ducreyi (strain 35000HP / ATCC 700724).